Reading from the N-terminus, the 485-residue chain is CCA-adding enzyme (485 aa).

S53 and R56 together coordinate ATP. S53 and R56 together coordinate CTP. The Mg(2+) site is built by D65, D67, and D124. Positions 146, 164, and 173 each coordinate ATP. The CTP site is built by H146, K164, and Y173.

Belongs to the tRNA nucleotidyltransferase/poly(A) polymerase family. Archaeal CCA-adding enzyme subfamily. Homodimer. Mg(2+) is required as a cofactor.

The enzyme catalyses a tRNA precursor + 2 CTP + ATP = a tRNA with a 3' CCA end + 3 diphosphate. The catalysed reaction is a tRNA with a 3' CCA end + 2 CTP + ATP = a tRNA with a 3' CCACCA end + 3 diphosphate. Functionally, catalyzes the addition and repair of the essential 3'-terminal CCA sequence in tRNAs without using a nucleic acid template. Adds these three nucleotides in the order of C, C, and A to the tRNA nucleotide-73, using CTP and ATP as substrates and producing inorganic pyrophosphate. tRNA 3'-terminal CCA addition is required both for tRNA processing and repair. Also involved in tRNA surveillance by mediating tandem CCA addition to generate a CCACCA at the 3' terminus of unstable tRNAs. While stable tRNAs receive only 3'-terminal CCA, unstable tRNAs are marked with CCACCA and rapidly degraded. This Methanopyrus kandleri (strain AV19 / DSM 6324 / JCM 9639 / NBRC 100938) protein is CCA-adding enzyme.